Here is a 362-residue protein sequence, read N- to C-terminus: Outer membrane porin protein OmpD (362 aa).

The signal sequence occupies residues 1 to 21 (MKLKLVAVAVTSLLAAGVVNA).

The protein belongs to the Gram-negative porin family. Homotrimer.

The protein resides in the cell outer membrane. Forms pores that allow passive diffusion of small molecules across the outer membrane. This Salmonella choleraesuis (strain SC-B67) protein is Outer membrane porin protein OmpD (ompD).